Reading from the N-terminus, the 226-residue chain is MVRVAVIRFPGTNCDLEMAWAVKLAGGDPEFVWHEDGGLDDFDAVIIPGGFTYGDYIRAGAIAALSPILEEIRECAEDGRPVLGVCNGMQILAEAELIPGTLTVNVGNRFICDWVYLRVERTDTPFTTKYQEDEVIRVPIAHAEGRYYYENPEEIEDNVVFRFCGPDGDVSEEYNLNGSVGGITGVVNDDGNVLGMMPHPERAAHRLLNSDDGLRLFESLVEWCRS.

The Glutamine amidotransferase type-1 domain maps to 3 to 226 (RVAVIRFPGT…FESLVEWCRS (224 aa)). Cysteine 86 acts as the Nucleophile in catalysis. Catalysis depends on residues histidine 199 and glutamate 201.

As to quaternary structure, part of the FGAM synthase complex composed of 1 PurL, 1 PurQ and 2 PurS subunits.

It localises to the cytoplasm. The catalysed reaction is N(2)-formyl-N(1)-(5-phospho-beta-D-ribosyl)glycinamide + L-glutamine + ATP + H2O = 2-formamido-N(1)-(5-O-phospho-beta-D-ribosyl)acetamidine + L-glutamate + ADP + phosphate + H(+). It catalyses the reaction L-glutamine + H2O = L-glutamate + NH4(+). It participates in purine metabolism; IMP biosynthesis via de novo pathway; 5-amino-1-(5-phospho-D-ribosyl)imidazole from N(2)-formyl-N(1)-(5-phospho-D-ribosyl)glycinamide: step 1/2. Functionally, part of the phosphoribosylformylglycinamidine synthase complex involved in the purines biosynthetic pathway. Catalyzes the ATP-dependent conversion of formylglycinamide ribonucleotide (FGAR) and glutamine to yield formylglycinamidine ribonucleotide (FGAM) and glutamate. The FGAM synthase complex is composed of three subunits. PurQ produces an ammonia molecule by converting glutamine to glutamate. PurL transfers the ammonia molecule to FGAR to form FGAM in an ATP-dependent manner. PurS interacts with PurQ and PurL and is thought to assist in the transfer of the ammonia molecule from PurQ to PurL. The chain is Phosphoribosylformylglycinamidine synthase subunit PurQ from Methanopyrus kandleri (strain AV19 / DSM 6324 / JCM 9639 / NBRC 100938).